An 85-amino-acid chain; its full sequence is Large ribosomal subunit protein bL27 (85 aa).

Over residues 1–10 (MAQKKGGGST) the composition is skewed to gly residues. The interval 1-20 (MAQKKGGGSTRNGRDSKPKM) is disordered.

Belongs to the bacterial ribosomal protein bL27 family.

This Acidovorax ebreus (strain TPSY) (Diaphorobacter sp. (strain TPSY)) protein is Large ribosomal subunit protein bL27.